Here is a 139-residue protein sequence, read N- to C-terminus: ATP synthase epsilon chain (139 aa).

This sequence belongs to the ATPase epsilon chain family. As to quaternary structure, F-type ATPases have 2 components, CF(1) - the catalytic core - and CF(0) - the membrane proton channel. CF(1) has five subunits: alpha(3), beta(3), gamma(1), delta(1), epsilon(1). CF(0) has three main subunits: a, b and c.

The protein localises to the cell inner membrane. Functionally, produces ATP from ADP in the presence of a proton gradient across the membrane. The sequence is that of ATP synthase epsilon chain from Pectobacterium carotovorum subsp. carotovorum (strain PC1).